Here is a 309-residue protein sequence, read N- to C-terminus: Small ribosomal subunit biogenesis GTPase RsgA (309 aa).

The 162-residue stretch at 64-225 (ENELVRPPLA…VADTPGFSTY (162 aa)) folds into the CP-type G domain. GTP is bound by residues 113 to 116 (SKTD) and 168 to 176 (GQTGAGKST). Positions 249, 254, 256, and 262 each coordinate Zn(2+).

It belongs to the TRAFAC class YlqF/YawG GTPase family. RsgA subfamily. Monomer. Associates with 30S ribosomal subunit, binds 16S rRNA. Zn(2+) is required as a cofactor.

The protein resides in the cytoplasm. One of several proteins that assist in the late maturation steps of the functional core of the 30S ribosomal subunit. Helps release RbfA from mature subunits. May play a role in the assembly of ribosomal proteins into the subunit. Circularly permuted GTPase that catalyzes slow GTP hydrolysis, GTPase activity is stimulated by the 30S ribosomal subunit. The protein is Small ribosomal subunit biogenesis GTPase RsgA of Pediococcus pentosaceus (strain ATCC 25745 / CCUG 21536 / LMG 10740 / 183-1w).